A 427-amino-acid chain; its full sequence is V-type proton ATPase subunit C 2 (427 aa).

A disordered region spans residues 292-319 (HKVKVTPLGNPDRPAAGQTDRERESEGE).

It belongs to the V-ATPase C subunit family. In terms of assembly, V-ATPase is a heteromultimeric enzyme made up of two complexes: the ATP-hydrolytic V1 complex and the proton translocation V0 complex. The V1 complex consists of three catalytic AB heterodimers that form a heterohexamer, three peripheral stalks each consisting of EG heterodimers, one central rotor including subunits D and F, and the regulatory subunits C and H. The proton translocation complex V0 consists of the proton transport subunit a, a ring of proteolipid subunits c9c'', rotary subunit d, subunits e and f, and the accessory subunits ATP6AP1/Ac45 and ATP6AP2/PRR. Kidney and placenta.

Subunit of the V1 complex of vacuolar(H+)-ATPase (V-ATPase), a multisubunit enzyme composed of a peripheral complex (V1) that hydrolyzes ATP and a membrane integral complex (V0) that translocates protons. V-ATPase is responsible for acidifying and maintaining the pH of intracellular compartments and in some cell types, is targeted to the plasma membrane, where it is responsible for acidifying the extracellular environment. Subunit C is necessary for the assembly of the catalytic sector of the enzyme and is likely to have a specific function in its catalytic activity. This Homo sapiens (Human) protein is V-type proton ATPase subunit C 2 (ATP6V1C2).